A 261-amino-acid polypeptide reads, in one-letter code: Basic leucine zipper 19 (261 aa).

Disordered regions lie at residues 1-22 and 74-100; these read MEDG…MGEL and ESDE…LGNR. Polar residues predominate over residues 8 to 18; it reads FSNQEVFSSSE. Positions 88–100 are enriched in basic and acidic residues; the sequence is CGKKGEKRPLGNR. Positions 89-155 constitute a bZIP domain; sequence GKKGEKRPLG…SRLKCLLVDL (67 aa). Positions 90–113 are basic motif; the sequence is KKGEKRPLGNREAVRKYREKKKAK. Residues 117-131 are leucine-zipper; that stretch reads LEDEVARLRAVNQQL. Residues 237 to 248 show a composition bias toward low complexity; the sequence is NGSFSNVNTSVS. The segment at 237–261 is disordered; the sequence is NGSFSNVNTSVSNKRKGGHRASRAV. Basic residues predominate over residues 249 to 261; that stretch reads NKRKGGHRASRAV.

The protein localises to the nucleus. Its function is as follows. Transcription factor involved in the response to zinc ion deficiency. Binds to the consensus sequence 5'-[AG]TGTCGACA[CT]-3' also called zinc deficiency response element (ZDRE). The ZDRE sequence is conserved in the plant kingdom and present in the promoters of genes that constitute the primary response to zinc deficiency, comprising additional ZIP metal transporter genes. Required for zinc accumulation in roots. Mediates the expression of the zinc transporters ZIP3, ZIP4, ZIP5 and ZIP9 during growth in zinc-deficient conditions. ZIP9 transporter is involved in zinc uptake in roots. The polypeptide is Basic leucine zipper 19 (Arabidopsis thaliana (Mouse-ear cress)).